Consider the following 331-residue polypeptide: UPF0194 membrane protein YbhG (331 aa).

Positions 1-19 (MKKPVVIGLAIAAIVTVIA) are cleaved as a signal peptide. Residues 107–208 (EEIAQAAAAV…LDLQDTTLIA (102 aa)) adopt a coiled-coil conformation.

The protein belongs to the UPF0194 family.

The protein localises to the periplasm. The protein is UPF0194 membrane protein YbhG of Salmonella arizonae (strain ATCC BAA-731 / CDC346-86 / RSK2980).